Consider the following 213-residue polypeptide: Putative tRNA methyltransferase MPN_351 (213 aa).

This sequence belongs to the TrmK family.

The protein localises to the cytoplasm. The chain is Putative tRNA methyltransferase MPN_351 from Mycoplasma pneumoniae (strain ATCC 29342 / M129 / Subtype 1) (Mycoplasmoides pneumoniae).